The following is a 147-amino-acid chain: Gastrula-specific protein 17 (147 aa).

The segment at 1 to 119 (MSQNLDFLAL…TQVYGNHQPG (119 aa)) is disordered. Polar residues-rich tracts occupy residues 20 to 36 (SPTSRHPSPKVWNSTPP), 45 to 57 (RQISPTPDQYTNP), and 74 to 88 (LLQNQRQSWGLSPTA).

This chain is Gastrula-specific protein 17 (gs17), found in Xenopus laevis (African clawed frog).